Here is a 145-residue protein sequence, read N- to C-terminus: Probable thioredoxin-2 (145 aa).

The Thioredoxin domain occupies V39–A144. Catalysis depends on nucleophile residues C68 and C71. Cysteines 68 and 71 form a disulfide.

Belongs to the thioredoxin family.

Its function is as follows. Participates in various redox reactions through the reversible oxidation of its active center dithiol to a disulfide and catalyzes dithiol-disulfide exchange reactions. This Caenorhabditis elegans protein is Probable thioredoxin-2 (trx-2).